Here is a 373-residue protein sequence, read N- to C-terminus: Dual-specificity RNA methyltransferase RlmN (373 aa).

E94 serves as the catalytic Proton acceptor. A Radical SAM core domain is found at 100 to 339; sequence EDDRATLCVS…VIVRKTRGDD (240 aa). Residues C107 and C344 are joined by a disulfide bond. Positions 114, 118, and 121 each coordinate [4Fe-4S] cluster. S-adenosyl-L-methionine is bound by residues 168-169, S200, 222-224, and N301; these read GE and SIH. C344 functions as the S-methylcysteine intermediate in the catalytic mechanism.

Belongs to the radical SAM superfamily. RlmN family. The cofactor is [4Fe-4S] cluster.

The protein resides in the cytoplasm. The enzyme catalyses adenosine(2503) in 23S rRNA + 2 reduced [2Fe-2S]-[ferredoxin] + 2 S-adenosyl-L-methionine = 2-methyladenosine(2503) in 23S rRNA + 5'-deoxyadenosine + L-methionine + 2 oxidized [2Fe-2S]-[ferredoxin] + S-adenosyl-L-homocysteine. The catalysed reaction is adenosine(37) in tRNA + 2 reduced [2Fe-2S]-[ferredoxin] + 2 S-adenosyl-L-methionine = 2-methyladenosine(37) in tRNA + 5'-deoxyadenosine + L-methionine + 2 oxidized [2Fe-2S]-[ferredoxin] + S-adenosyl-L-homocysteine. In terms of biological role, specifically methylates position 2 of adenine 2503 in 23S rRNA and position 2 of adenine 37 in tRNAs. m2A2503 modification seems to play a crucial role in the proofreading step occurring at the peptidyl transferase center and thus would serve to optimize ribosomal fidelity. The polypeptide is Dual-specificity RNA methyltransferase RlmN (Shewanella oneidensis (strain ATCC 700550 / JCM 31522 / CIP 106686 / LMG 19005 / NCIMB 14063 / MR-1)).